Here is a 347-residue protein sequence, read N- to C-terminus: MLISQRPTLSEEVLTDSRSQFVIEPLEPGFGYTLGNSLRRTLLSSIPGAAVTSIRIDGVLHEFTTVPGVKEDVTDIILNLKALVVSSEEDEPVTMYLRKQGPGEVTAGDIVPPAGVTVHNPNMRIATLNDKGKLEVELVVERGRGYVPAVQNRASGAEIGRIPVDSIYSPVLKVTYKVDATRVEQRTDFDKLILDVETKNSITPRDALASAGKTLVELFGLARELNVEAEGIEIGPSPAEADHIASFALPIDDLDLTVRSYNCLKREGVHTVGELVSRTESDLLDIRNFGQKSIDEVKVKLHQLGLSLKDSPPSFDPSEVAGYDVATGTWSTEGAYDDQDYAETEQL.

The alpha N-terminal domain (alpha-NTD) stretch occupies residues 1 to 226 (MLISQRPTLS…ELFGLARELN (226 aa)). An alpha C-terminal domain (alpha-CTD) region spans residues 241–347 (ADHIASFALP…DQDYAETEQL (107 aa)).

This sequence belongs to the RNA polymerase alpha chain family. Homodimer. The RNAP catalytic core consists of 2 alpha, 1 beta, 1 beta' and 1 omega subunit. When a sigma factor is associated with the core the holoenzyme is formed, which can initiate transcription.

The enzyme catalyses RNA(n) + a ribonucleoside 5'-triphosphate = RNA(n+1) + diphosphate. DNA-dependent RNA polymerase catalyzes the transcription of DNA into RNA using the four ribonucleoside triphosphates as substrates. This Mycobacterium ulcerans (strain Agy99) protein is DNA-directed RNA polymerase subunit alpha.